A 283-amino-acid chain; its full sequence is Quinate/shikimate dehydrogenase (NAD(+)) (283 aa).

Residues S17, T69, K73, N94, and D110 each coordinate shikimate. L-quinate contacts are provided by residues 17–19 (SRT), T69, K73, N94, and D110. K73 acts as the Proton acceptor in catalysis. NAD(+) contacts are provided by residues 137-138 (GV), D158, R163, 203-206 (PMGM), A213, V228, and G251. Shikimate is bound at residue Q258. Q258 lines the L-quinate pocket.

Belongs to the shikimate dehydrogenase family. Homodimer.

It carries out the reaction L-quinate + NAD(+) = 3-dehydroquinate + NADH + H(+). It catalyses the reaction shikimate + NAD(+) = 3-dehydroshikimate + NADH + H(+). It functions in the pathway metabolic intermediate biosynthesis; chorismate biosynthesis; chorismate from D-erythrose 4-phosphate and phosphoenolpyruvate: step 4/7. The protein operates within aromatic compound metabolism; 3,4-dihydroxybenzoate biosynthesis; 3-dehydroquinate from D-quinate (NAD(+) route). Its function is as follows. Involved in the biosynthesis of the chorismate, which leads to the biosynthesis of aromatic amino acids, and plays a key role in the quinate degradation pathway. Catalyzes the NAD(+)-dependent oxidation of both quinate and shikimate to 3-dehydroquinate and 3-dehydroshikimate, respectively. It can only use NAD. The polypeptide is Quinate/shikimate dehydrogenase (NAD(+)) (Corynebacterium glutamicum (strain ATCC 13032 / DSM 20300 / JCM 1318 / BCRC 11384 / CCUG 27702 / LMG 3730 / NBRC 12168 / NCIMB 10025 / NRRL B-2784 / 534)).